A 34-amino-acid chain; its full sequence is Photosystem II reaction center protein Psb30 (34 aa).

Residues 6 to 26 form a helical membrane-spanning segment; that stretch reads VIGQLVSTGLIGLLGPAVIIL.

Belongs to the Psb30/Ycf12 family. PSII is composed of 1 copy each of membrane proteins PsbA, PsbB, PsbC, PsbD, PsbE, PsbF, PsbH, PsbI, PsbJ, PsbK, PsbL, PsbM, PsbT, PsbX, PsbY, PsbZ, Psb30/Ycf12, peripheral proteins of the oxygen-evolving complex and a large number of cofactors. It forms dimeric complexes.

It localises to the plastid. Its subcellular location is the chloroplast thylakoid membrane. A core subunit of photosystem II (PSII), probably helps stabilize the reaction center. The polypeptide is Photosystem II reaction center protein Psb30 (Skeletonema costatum (Marine centric diatom)).